The primary structure comprises 222 residues: Probable transcriptional regulator ycf29 (222 aa).

Positions 4-120 (KLMLVENDIV…ELLSIINNLI (117 aa)) constitute a Response regulatory domain. Asp-53 carries the post-translational modification 4-aspartylphosphate. The 66-residue stretch at 139 to 204 (QLNHKIRLTP…LLVKYSINNN (66 aa)) folds into the HTH luxR-type domain. Residues 163-182 (NKEISTILNTSVRNVEKYVS) constitute a DNA-binding region (H-T-H motif).

The protein resides in the plastid. The protein localises to the chloroplast. This is Probable transcriptional regulator ycf29 (ycf29) from Pyropia yezoensis (Susabi-nori).